A 390-amino-acid chain; its full sequence is Chitinase-3-like protein 2 (390 aa).

The first 26 residues, 1–26, serve as a signal peptide directing secretion; that stretch reads MGATTMDQKSLWAGVVVLLLLQGGSA. A GH18 domain is found at 27–390; it reads YKLVCYFTNW…QAVKRSLGSL (364 aa). The cysteines at positions 31 and 56 are disulfide-linked. N-linked (GlcNAc...) asparagine glycosylation occurs at Asn35. Chitin is bound by residues 75–76, 102–105, Tyr104, Tyr146, 210–213, Asp213, and Trp360; these read DK, GGYL, and LSFD.

Belongs to the glycosyl hydrolase 18 family. In terms of tissue distribution, highest expression in chondrocytes, followed by synoviocytes, lung and heart. Not detected in spleen, pancreas, and liver. May also be expressed in developing brain and placenta.

Its subcellular location is the secreted. Lectin that binds chitooligosaccharides and other glycans with high affinity, but not heparin. Has no chitinase activity. This Homo sapiens (Human) protein is Chitinase-3-like protein 2 (CHI3L2).